The primary structure comprises 100 residues: U-myrmeciitoxin(01)-Mg7b (100 aa).

The N-terminal stretch at 1–17 is a signal peptide; sequence MKLSCLSLALAIILVLA. Residues 18 to 50 constitute a propeptide that is removed on maturation; sequence IVYSPHMEVKALADAEPDAIGFADAFGEADAEP. A glycan (O-linked (GalNAc...) serine) is linked at serine 85. O-linked (GalNAc...) threonine glycans are attached at residues threonine 94 and threonine 95.

It belongs to the formicidae venom precursor-01 superfamily. In terms of processing, glycosylation is critical to maintaining the aqueous solubility of this protein, but does not directly contribute to its activity. As to expression, expressed by the venom gland.

It localises to the secreted. The protein localises to the target cell membrane. Functionally, neurotoxin that triggers pain behavior and inflammation in mammals, and is paralytic and lethal to insects. Causes a time-dependent increase in cell leak current. May act by targeting membranes. In Myrmecia gulosa (Red bulldog ant), this protein is U-myrmeciitoxin(01)-Mg7b.